Here is a 166-residue protein sequence, read N- to C-terminus: Podoplanin (166 aa).

A signal peptide spans 1 to 22 (MWTAPVLLWVLGSVWFWDSAQG). Topologically, residues 23–135 (GAIGALEDDL…KKDGLAVVTL (113 aa)) are extracellular. Thr-34, Thr-52, Thr-55, and Thr-56 each carry an O-linked (GalNAc...) threonine glycan. The span at 54–63 (DTTGELDKST) shows a compositional bias: basic and acidic residues. The interval 54 to 124 (DTTGELDKST…DNAGGETQTT (71 aa)) is disordered. A glycan (O-linked (GalNAc...) serine) is linked at Ser-62. Thr-63, Thr-71, and Thr-80 each carry an O-linked (GalNAc...) threonine glycan. Ser-81 is a glycosylation site (O-linked (GalNAc...) serine). O-linked (GalNAc...) threonine glycosylation occurs at Thr-83. O-linked (GalNAc...) serine glycosylation is present at Ser-84. Over residues 84 to 93 (SDHDHKEHES) the composition is skewed to basic and acidic residues. Thr-94, Thr-95, Thr-96, Thr-101, Thr-105, Thr-109, and Thr-110 each carry an O-linked (GalNAc...) threonine glycan. Residues 94 to 103 (TTTVKAVTSH) show a composition bias toward polar residues. Over residues 104-114 (STDKKTTHPNR) the composition is skewed to basic and acidic residues. The chain crosses the membrane as a helical span at residues 136–156 (VGIIIGVLLAIGFIGGIIIVV). Positions 137-141 (GIIIG) are requires for dimerization and lipid rafts association. The Cytoplasmic segment spans residues 157–166 (MRKISGRFSP). A requires for interaction with MSN and EZR region spans residues 158 to 159 (RK).

Belongs to the podoplanin family. In terms of assembly, homodimer. Interacts with CLEC1B; the interaction is independent of CLEC1B glycosylation and activates CLEC1B; the interaction is dependent of sialic acid on O-glycans. Interacts with CD9; this interaction is homophilic and attenuates platelet aggregation and pulmonary metastasis induced by PDPN. Interacts with LGALS8; the interaction is glycosylation-dependent; may participate in connection of the lymphatic endothelium to the surrounding extracellular matrix. Interacts with HSPA9. Interacts (via extracellular domain) with CD44; this interaction is required for PDPN-mediated directional migration and regulation of lamellipodia extension/stabilization during cell spreading and migration. Interacts (via cytoplasmic domain) with MSN and EZR; activates RHOA and promotes epithelial-mesenchymal transition. Interacts with CCL21; relocalized PDPN to the basolateral membrane. In terms of processing, extensively O-glycosylated. Contains sialic acid residues. O-glycosylation is necessary for platelet aggregation activity. Disialylated at Thr-52; sialic acid is critical for platelet-aggregating activity and for CLEC1B interaction. The N-terminus is blocked. As to expression, in adult kidney, expressed on the urinary surface and foot processes of podocytes and in parietal epithelial cells of Bowman's capsule where it is localized to luminal surfaces. In lung, expressed exclusively on luminal surfaces of type I alveolar epithelial cells and pleural mesothelial cells. Not expressed in type II alveolar cells. In bone, expressed in osteocytes and osteoblasts. In spleen, liver, stomach and intestine, expressed in mesoepithelium. Also expressed in thymic epithelial cells, choroid plexus and leptomeninges.

It is found in the membrane. The protein resides in the cell projection. The protein localises to the lamellipodium membrane. It localises to the filopodium membrane. Its subcellular location is the microvillus membrane. It is found in the ruffle membrane. The protein resides in the membrane raft. The protein localises to the apical cell membrane. It localises to the basolateral cell membrane. Its subcellular location is the invadopodium. Functionally, mediates effects on cell migration and adhesion through its different partners. During development plays a role in blood and lymphatic vessels separation by binding CLEC1B, triggering CLEC1B activation in platelets and leading to platelet activation and/or aggregation. Interaction with CD9, on the contrary, attenuates platelet aggregation and pulmonary metastasis induced by PDPN. Mediates effects on cell migration and adhesion through its different partners. Through MSN or EZR interaction promotes epithelial-mesenchymal transition (EMT) leading to ERZ phosphorylation and triggering RHOA activation leading to cell migration increase and invasiveness. Interaction with CD44 promotes directional cell migration in epithelial and tumor cells. In lymph nodes (LNs), controls fibroblastic reticular cells (FRCs) adhesion to the extracellular matrix (ECM) and contraction of the actomyosin by maintaining ERM proteins (EZR; MSN and RDX) and MYL9 activation through association with unknown transmembrane proteins. Engagement of CLEC1B by PDPN promotes FRCs relaxation by blocking lateral membrane interactions leading to reduction of ERM proteins (EZR; MSN and RDX) and MYL9 activation. Through binding with LGALS8 may participate in connection of the lymphatic endothelium to the surrounding extracellular matrix. In keratinocytes, induces changes in cell morphology showing an elongated shape, numerous membrane protrusions, major reorganization of the actin cytoskeleton, increased motility and decreased cell adhesion. Controls invadopodia stability and maturation leading to efficient degradation of the extracellular matrix (ECM) in tumor cells through modulation of RHOC activity in order to activate ROCK1/ROCK2 and LIMK1/LIMK2 and inactivation of CFL1. Required for normal lung cell proliferation and alveolus formation at birth. Does not function as a water channel or as a regulator of aquaporin-type water channels. Does not have any effect on folic acid or amino acid transport. In Rattus norvegicus (Rat), this protein is Podoplanin.